The primary structure comprises 609 residues: UvrABC system protein C (609 aa).

A GIY-YIG domain is found at 13-91 (HEPGVYRMYD…IKLYQPRYNV (79 aa)). A UVR domain is found at 201–236 (QQVLDYLIGKMEQASRNLDFEQAARYRDQIQAVRSV).

Belongs to the UvrC family. In terms of assembly, interacts with UvrB in an incision complex.

The protein localises to the cytoplasm. The UvrABC repair system catalyzes the recognition and processing of DNA lesions. UvrC both incises the 5' and 3' sides of the lesion. The N-terminal half is responsible for the 3' incision and the C-terminal half is responsible for the 5' incision. The protein is UvrABC system protein C of Haemophilus influenzae (strain ATCC 51907 / DSM 11121 / KW20 / Rd).